The chain runs to 65 residues: UPF0434 protein HS_0657 (65 aa).

It belongs to the UPF0434 family.

The sequence is that of UPF0434 protein HS_0657 from Histophilus somni (strain 129Pt) (Haemophilus somnus).